The chain runs to 307 residues: Ribosomal protein L11 methyltransferase (307 aa).

4 residues coordinate S-adenosyl-L-methionine: T154, G178, D200, and N242.

Belongs to the methyltransferase superfamily. PrmA family.

It localises to the cytoplasm. It catalyses the reaction L-lysyl-[protein] + 3 S-adenosyl-L-methionine = N(6),N(6),N(6)-trimethyl-L-lysyl-[protein] + 3 S-adenosyl-L-homocysteine + 3 H(+). Methylates ribosomal protein L11. This chain is Ribosomal protein L11 methyltransferase, found in Syntrophotalea carbinolica (strain DSM 2380 / NBRC 103641 / GraBd1) (Pelobacter carbinolicus).